Consider the following 48-residue polypeptide: Large ribosomal subunit protein uL14 (48 aa).

It belongs to the universal ribosomal protein uL14 family.

In Onchocerca volvulus, this protein is Large ribosomal subunit protein uL14 (RPL23).